Here is an 828-residue protein sequence, read N- to C-terminus: Protein TAPT1 homolog (828 aa).

Low complexity-rich tracts occupy residues 67–83 (NNNNNNNSNNVSSGNHI), 212–233 (QQTQPQPQPQTQTTQQPSSQQP), and 302–321 (SNNNDNNDNNNNNNSKNNNN). Disordered stretches follow at residues 67 to 92 (NNNNNNNSNNVSSGNHITNSNSNSSG), 212 to 236 (QQTQPQPQPQTQTTQQPSSQQPFSY), and 297 to 346 (QTTP…TSSI). 5 helical membrane-spanning segments follow: residues 428 to 448 (ISFGFLVCFDSFLFLFTFLPI), 472 to 492 (QIFDLFRGFIWVTCFVFLNFI), 562 to 582 (ILGPFTHLLVATGYVCLHSLV), 722 to 742 (SSWGVNNIIGFVPFPLASIVV), and 754 to 774 (IFGIFLMVQIYICLVLLKIFI). Residues 797–822 (LSSSSSSSSSNSLNTTSTTSTSTSTT) show a composition bias toward low complexity. The tract at residues 797-828 (LSSSSSSSSSNSLNTTSTTSTSTSTTNDKKNN) is disordered.

The protein belongs to the TAPT1 family.

It localises to the membrane. The sequence is that of Protein TAPT1 homolog from Dictyostelium discoideum (Social amoeba).